The following is a 289-amino-acid chain: 4-hydroxy-3-methylbut-2-enyl diphosphate reductase (289 aa).

A [4Fe-4S] cluster-binding site is contributed by Cys-13. His-42 and His-76 together coordinate (2E)-4-hydroxy-3-methylbut-2-enyl diphosphate. Positions 42 and 76 each coordinate dimethylallyl diphosphate. Isopentenyl diphosphate-binding residues include His-42 and His-76. Cys-98 is a [4Fe-4S] cluster binding site. His-130 is a binding site for (2E)-4-hydroxy-3-methylbut-2-enyl diphosphate. His-130 contributes to the dimethylallyl diphosphate binding site. Isopentenyl diphosphate is bound at residue His-130. The active-site Proton donor is Glu-132. Residue Thr-168 coordinates (2E)-4-hydroxy-3-methylbut-2-enyl diphosphate. Cys-199 provides a ligand contact to [4Fe-4S] cluster. 4 residues coordinate (2E)-4-hydroxy-3-methylbut-2-enyl diphosphate: Ser-227, Ser-228, Asn-229, and Ser-272. Dimethylallyl diphosphate contacts are provided by Ser-227, Ser-228, Asn-229, and Ser-272. Isopentenyl diphosphate is bound by residues Ser-227, Ser-228, Asn-229, and Ser-272.

This sequence belongs to the IspH family. It depends on [4Fe-4S] cluster as a cofactor.

The catalysed reaction is isopentenyl diphosphate + 2 oxidized [2Fe-2S]-[ferredoxin] + H2O = (2E)-4-hydroxy-3-methylbut-2-enyl diphosphate + 2 reduced [2Fe-2S]-[ferredoxin] + 2 H(+). It catalyses the reaction dimethylallyl diphosphate + 2 oxidized [2Fe-2S]-[ferredoxin] + H2O = (2E)-4-hydroxy-3-methylbut-2-enyl diphosphate + 2 reduced [2Fe-2S]-[ferredoxin] + 2 H(+). Its pathway is isoprenoid biosynthesis; dimethylallyl diphosphate biosynthesis; dimethylallyl diphosphate from (2E)-4-hydroxy-3-methylbutenyl diphosphate: step 1/1. The protein operates within isoprenoid biosynthesis; isopentenyl diphosphate biosynthesis via DXP pathway; isopentenyl diphosphate from 1-deoxy-D-xylulose 5-phosphate: step 6/6. Functionally, catalyzes the conversion of 1-hydroxy-2-methyl-2-(E)-butenyl 4-diphosphate (HMBPP) into a mixture of isopentenyl diphosphate (IPP) and dimethylallyl diphosphate (DMAPP). Acts in the terminal step of the DOXP/MEP pathway for isoprenoid precursor biosynthesis. The chain is 4-hydroxy-3-methylbut-2-enyl diphosphate reductase from Porphyromonas gingivalis (strain ATCC BAA-308 / W83).